A 1469-amino-acid polypeptide reads, in one-letter code: Protein BCL9 homolog (1469 aa).

The segment covering Met-1–Gln-16 has biased composition (polar residues). 5 disordered regions span residues Met-1 to Ala-131, Ser-161 to Pro-187, Glu-200 to Asp-222, Glu-422 to Pro-442, and Gly-454 to Ser-474. Ser-9 is subject to Phosphoserine. Thr-11 is modified (phosphothreonine). Positions Pro-17–Ala-34 are enriched in low complexity. 2 stretches are compositionally biased toward polar residues: residues Ser-40–Pro-60 and Ser-90–Leu-113. A compositionally biased stretch (low complexity) spans Ser-116–Ser-130. At Ser-206 the chain carries Phosphoserine. Thr-208 carries the post-translational modification Phosphothreonine. Ser-210 is modified (phosphoserine). Polar residues-rich tracts occupy residues Glu-422–Asp-438 and Gly-455–Ser-474. Positions Ser-511–Asn-555 are ARM-binding. 3 disordered regions span residues Gly-728–Val-830, Cys-844–Val-913, and Gln-961–Asn-991. Low complexity predominate over residues Pro-731 to Pro-745. The segment covering Ile-770–Gln-781 has biased composition (polar residues). The span at Ser-782–Pro-796 shows a compositional bias: low complexity. Composition is skewed to polar residues over residues Pro-806–Val-830 and Cys-844–Ser-880. Residues Ser-883, Ser-905, and Ser-911 each carry the phosphoserine modification. The segment covering Pro-904 to Val-913 has biased composition (polar residues).

It belongs to the BCL9 family. Binds to ARM and PYGO.

It is found in the nucleus. In terms of biological role, involved in signal transduction through the Wnt pathway. This is Protein BCL9 homolog (lgs) from Drosophila melanogaster (Fruit fly).